Reading from the N-terminus, the 512-residue chain is Putative aldehyde-dehydrogenase-like protein y4uC (512 aa).

The interval 14–41 (MKPERGRRSPLPRRPTRPPDERSSGIGN) is disordered. 266-271 (GGFATG) serves as a coordination point for NADP(+). Catalysis depends on residues glutamate 286 and cysteine 320.

The protein belongs to the aldehyde dehydrogenase family.

The protein operates within amino-acid degradation; 4-aminobutanoate degradation. Could be a succinate-semialdehyde dehydrogenase (NADP(+)). In Sinorhizobium fredii (strain NBRC 101917 / NGR234), this protein is Putative aldehyde-dehydrogenase-like protein y4uC.